Reading from the N-terminus, the 292-residue chain is 4-hydroxy-tetrahydrodipicolinate synthase (292 aa).

Position 50 (Thr50) interacts with pyruvate. The active-site Proton donor/acceptor is Tyr139. Lys167 acts as the Schiff-base intermediate with substrate in catalysis. Ile208 contributes to the pyruvate binding site.

It belongs to the DapA family. As to quaternary structure, homotetramer; dimer of dimers.

It is found in the cytoplasm. It catalyses the reaction L-aspartate 4-semialdehyde + pyruvate = (2S,4S)-4-hydroxy-2,3,4,5-tetrahydrodipicolinate + H2O + H(+). The protein operates within amino-acid biosynthesis; L-lysine biosynthesis via DAP pathway; (S)-tetrahydrodipicolinate from L-aspartate: step 3/4. In terms of biological role, catalyzes the condensation of (S)-aspartate-beta-semialdehyde [(S)-ASA] and pyruvate to 4-hydroxy-tetrahydrodipicolinate (HTPA). The polypeptide is 4-hydroxy-tetrahydrodipicolinate synthase (Oenococcus oeni (strain ATCC BAA-331 / PSU-1)).